Reading from the N-terminus, the 183-residue chain is uncharacterized protein (183 aa).

It belongs to the Bcl-2 family.

This is an uncharacterized protein from Equine herpesvirus 2 (strain 86/87) (EHV-2).